The chain runs to 492 residues: Protein nucleotidyltransferase YdiU (492 aa).

The ATP site is built by Gly95, Gly97, Arg98, Lys118, Asp130, Gly131, Arg181, and Arg188. Catalysis depends on Asp257, which acts as the Proton acceptor. The Mg(2+) site is built by Asn258 and Asp267. Position 267 (Asp267) interacts with ATP. Residues 466-475 (YDDQPEHAEY) show a composition bias toward basic and acidic residues. A disordered region spans residues 466–492 (YDDQPEHAEYRQPPPPSEKPYQTFCGT).

This sequence belongs to the SELO family. Mg(2+) serves as cofactor. Requires Mn(2+) as cofactor.

It carries out the reaction L-seryl-[protein] + ATP = 3-O-(5'-adenylyl)-L-seryl-[protein] + diphosphate. The enzyme catalyses L-threonyl-[protein] + ATP = 3-O-(5'-adenylyl)-L-threonyl-[protein] + diphosphate. It catalyses the reaction L-tyrosyl-[protein] + ATP = O-(5'-adenylyl)-L-tyrosyl-[protein] + diphosphate. The catalysed reaction is L-histidyl-[protein] + UTP = N(tele)-(5'-uridylyl)-L-histidyl-[protein] + diphosphate. It carries out the reaction L-seryl-[protein] + UTP = O-(5'-uridylyl)-L-seryl-[protein] + diphosphate. The enzyme catalyses L-tyrosyl-[protein] + UTP = O-(5'-uridylyl)-L-tyrosyl-[protein] + diphosphate. Functionally, nucleotidyltransferase involved in the post-translational modification of proteins. It can catalyze the addition of adenosine monophosphate (AMP) or uridine monophosphate (UMP) to a protein, resulting in modifications known as AMPylation and UMPylation. The polypeptide is Protein nucleotidyltransferase YdiU (Syntrophotalea carbinolica (strain DSM 2380 / NBRC 103641 / GraBd1) (Pelobacter carbinolicus)).